A 404-amino-acid polypeptide reads, in one-letter code: Sulfate adenylyltransferase (404 aa).

It belongs to the sulfate adenylyltransferase family.

The catalysed reaction is sulfate + ATP + H(+) = adenosine 5'-phosphosulfate + diphosphate. It functions in the pathway sulfur metabolism; hydrogen sulfide biosynthesis; sulfite from sulfate: step 1/3. In Chlorobium chlorochromatii (strain CaD3), this protein is Sulfate adenylyltransferase.